The primary structure comprises 205 residues: Arginine exporter protein ArgO (205 aa).

6 helical membrane passes run 1–21 (MLAV…PLGP), 42–62 (LCAL…SALL), 67–87 (LLLA…GWGA), 111–131 (ILVT…DTFV), 147–167 (WFAL…ALLA), and 185–205 (LFVG…GFGL).

It belongs to the LysE/ArgO transporter (TC 2.A.75) family.

The protein resides in the cell inner membrane. The catalysed reaction is L-arginine(in) = L-arginine(out). Functionally, involved in the export of arginine. Important to control the intracellular level of arginine and the correct balance between arginine and lysine. This is Arginine exporter protein ArgO from Yersinia pseudotuberculosis serotype IB (strain PB1/+).